We begin with the raw amino-acid sequence, 275 residues long: Trans-aconitate 2-methyltransferase (275 aa).

The protein belongs to the methyltransferase superfamily. Tam family.

The protein resides in the cytoplasm. It carries out the reaction trans-aconitate + S-adenosyl-L-methionine = (E)-3-(methoxycarbonyl)pent-2-enedioate + S-adenosyl-L-homocysteine. Its function is as follows. Catalyzes the S-adenosylmethionine monomethyl esterification of trans-aconitate. In Pseudomonas paraeruginosa (strain DSM 24068 / PA7) (Pseudomonas aeruginosa (strain PA7)), this protein is Trans-aconitate 2-methyltransferase.